The sequence spans 353 residues: (-)-beta-caryophyllene synthase ((2E,6E)-farnesyl diphosphate cyclizing) (353 aa).

Mg(2+) is bound by residues Asp85 and Asp89. Residues 85 to 89 (DDQFD) carry the DDXXD motif motif. Residue Arg179 coordinates substrate. The Mg(2+) site is built by Asn225 and Ser229. Lys232 lines the substrate pocket. Residue Glu233 coordinates Mg(2+). 320–321 (RF) contributes to the substrate binding site.

This sequence belongs to the terpene synthase family. Requires Mg(2+) as cofactor.

It carries out the reaction (2E,6E)-farnesyl diphosphate = (-)-(E)-beta-caryophyllene + diphosphate. It functions in the pathway secondary metabolite biosynthesis; terpenoid biosynthesis. Functionally, catalyzes the conversion of (2E,6E)-farnesyl diphosphate (FPP) to yield the bicyclic sesquiterpene (2S,10R)-(-)-(E)-beta-caryophyllene via a probable 1,10-cyclization, which could involve the abstraction of the pyrophosphate from FPP to yield a (E,E)-germacradienyl cation. This chain is (-)-beta-caryophyllene synthase ((2E,6E)-farnesyl diphosphate cyclizing) (ptlA), found in Saccharothrix espanaensis (strain ATCC 51144 / DSM 44229 / JCM 9112 / NBRC 15066 / NRRL 15764).